Consider the following 708-residue polypeptide: Fatty acid oxidation complex subunit alpha (708 aa).

The tract at residues 1 to 191 (MDNNNAFQLS…KLGVVDACVP (191 aa)) is enoyl-CoA hydratase. The interval 311-708 (APVAAVGVLG…RAGLGEKFYP (398 aa)) is 3-hydroxyacyl-CoA dehydrogenase.

The protein in the N-terminal section; belongs to the enoyl-CoA hydratase/isomerase family. It in the central section; belongs to the 3-hydroxyacyl-CoA dehydrogenase family. Heterotetramer of two alpha chains (FadJ) and two beta chains (FadI).

It localises to the cytoplasm. It catalyses the reaction a (3S)-3-hydroxyacyl-CoA = a (2E)-enoyl-CoA + H2O. The catalysed reaction is a 4-saturated-(3S)-3-hydroxyacyl-CoA = a (3E)-enoyl-CoA + H2O. The enzyme catalyses a (3S)-3-hydroxyacyl-CoA + NAD(+) = a 3-oxoacyl-CoA + NADH + H(+). It carries out the reaction (3S)-3-hydroxybutanoyl-CoA = (3R)-3-hydroxybutanoyl-CoA. It functions in the pathway lipid metabolism; fatty acid beta-oxidation. Functionally, catalyzes the formation of a hydroxyacyl-CoA by addition of water on enoyl-CoA. Also exhibits 3-hydroxyacyl-CoA epimerase and 3-hydroxyacyl-CoA dehydrogenase activities. This is Fatty acid oxidation complex subunit alpha from Vibrio cholerae serotype O1 (strain ATCC 39315 / El Tor Inaba N16961).